The primary structure comprises 164 residues: Phosphopantetheine adenylyltransferase (164 aa).

Serine 11 is a substrate binding site. ATP is bound by residues 11 to 12 (SF) and histidine 19. Residues lysine 43, leucine 75, and arginine 89 each coordinate substrate. ATP contacts are provided by residues 90–92 (GLR), glutamate 100, and 125–131 (YGYLSSS).

This sequence belongs to the bacterial CoaD family. In terms of assembly, homohexamer. It depends on Mg(2+) as a cofactor.

The protein localises to the cytoplasm. The enzyme catalyses (R)-4'-phosphopantetheine + ATP + H(+) = 3'-dephospho-CoA + diphosphate. Its pathway is cofactor biosynthesis; coenzyme A biosynthesis; CoA from (R)-pantothenate: step 4/5. Its function is as follows. Reversibly transfers an adenylyl group from ATP to 4'-phosphopantetheine, yielding dephospho-CoA (dPCoA) and pyrophosphate. The protein is Phosphopantetheine adenylyltransferase of Geobacter sulfurreducens (strain ATCC 51573 / DSM 12127 / PCA).